Reading from the N-terminus, the 725-residue chain is ATP-dependent zinc metalloprotease FtsH (725 aa).

The Cytoplasmic portion of the chain corresponds to 1–11 (MDKMKKPKINW). The helical transmembrane segment at 12 to 32 (LLIVIVGIIAALLITVLVLLF) threads the bilayer. Over 33 to 160 (SPKTQPKSFD…LFGQHIVQEN (128 aa)) the chain is Extracellular. Residues 161-181 (GFITFIKAIWFPALIAIIIFL) traverse the membrane as a helical segment. Topologically, residues 182–725 (GYKAQSRAAS…EEETLAEKAE (544 aa)) are cytoplasmic. ATP is bound at residue 252-259 (GPPGTGKT). His-474 contacts Zn(2+). Residue Glu-475 is part of the active site. His-478 and Asp-552 together coordinate Zn(2+). The disordered stretch occupies residues 680-725 (QVNESQEKDKQKNAQIKEDLSKMDKKDNLTKAKDKGEEETLAEKAE). Residues 684–725 (SQEKDKQKNAQIKEDLSKMDKKDNLTKAKDKGEEETLAEKAE) show a composition bias toward basic and acidic residues.

The protein in the central section; belongs to the AAA ATPase family. This sequence in the C-terminal section; belongs to the peptidase M41 family. In terms of assembly, homohexamer. Zn(2+) serves as cofactor.

The protein localises to the cell membrane. Its function is as follows. Acts as a processive, ATP-dependent zinc metallopeptidase for both cytoplasmic and membrane proteins. Plays a role in the quality control of integral membrane proteins. This chain is ATP-dependent zinc metalloprotease FtsH, found in Mycoplasmopsis pulmonis (strain UAB CTIP) (Mycoplasma pulmonis).